The chain runs to 467 residues: Probable protein phosphatase 2C 6 (467 aa).

Positions V61–G81 are disordered. One can recognise a PPM-type phosphatase domain in the interval L149–L457. Mn(2+) contacts are provided by D205, G206, D386, and D448.

It belongs to the PP2C family. In terms of assembly, interacts with PYL9. The cofactor is Mg(2+). Mn(2+) serves as cofactor.

Its subcellular location is the nucleus. It is found in the cytoplasm. The protein resides in the cytosol. It carries out the reaction O-phospho-L-seryl-[protein] + H2O = L-seryl-[protein] + phosphate. The enzyme catalyses O-phospho-L-threonyl-[protein] + H2O = L-threonyl-[protein] + phosphate. Its function is as follows. Probable protein phosphatase that may function in abscisic acid (ABA) signaling. The polypeptide is Probable protein phosphatase 2C 6 (Oryza sativa subsp. japonica (Rice)).